The primary structure comprises 635 residues: Extracellular metalloproteinase mep (635 aa).

Positions 1–19 are cleaved as a signal peptide; it reads MMRGLLLAGALGLPLAVLA. The propeptide occupies 20-246; sequence HPTHHAHGLQ…VHGVVDYVAE (227 aa). A glycan (N-linked (GlcNAc...) asparagine) is linked at Asn-287. The span at 290–309 shows a compositional bias: polar residues; it reads TTRGNNGIAQSNPTGGSQYL. Residues 290–311 are disordered; it reads TTRGNNGIAQSNPTGGSQYLKN. Residue His-430 participates in Zn(2+) binding. Residue Glu-431 is part of the active site. A Zn(2+)-binding site is contributed by His-434.

Belongs to the peptidase M36 family. Zn(2+) is required as a cofactor.

The protein localises to the secreted. In terms of biological role, secreted metalloproteinase that allows assimilation of proteinaceous substrates. The chain is Extracellular metalloproteinase mep (mep) from Aspergillus flavus (strain ATCC 200026 / FGSC A1120 / IAM 13836 / NRRL 3357 / JCM 12722 / SRRC 167).